Consider the following 420-residue polypeptide: Outer capsid protein P8 (420 aa).

This sequence belongs to the phytoreovirus outer capsid protein P8 family. As to quaternary structure, homotrimer. Homomultimer. Interacts with host peroxisomal glycolate oxidase (GOX). This interaction mediates its relocation to virus factories peripheral to host peroxisomes.

The protein resides in the virion. It localises to the host cytoplasm. In terms of biological role, capsid protein which self-assembles to form the outer icosahedral capsid with a T=13 symmetry, about 70 nm in diameter and consisting of 780 molecules capsid proteins. The chain is Outer capsid protein P8 from Alopecurus aequalis (Barnyard grass).